The following is a 633-amino-acid chain: Pesticidal crystal protein Cry2Aa (633 aa).

Belongs to the delta endotoxin family.

Its function is as follows. Promotes colloidosmotic lysis by binding to the midgut epithelial cells of both dipteran (Aedes aegypti) and lepidopteran (Manduca sexta) larvae. This Bacillus thuringiensis subsp. kenyae protein is Pesticidal crystal protein Cry2Aa (cry2Aa).